Reading from the N-terminus, the 185-residue chain is Large ribosomal subunit protein uL22 (185 aa).

It belongs to the universal ribosomal protein uL22 family. Part of the 50S ribosomal subunit.

Its function is as follows. This protein binds specifically to 23S rRNA. It makes multiple contacts with different domains of the 23S rRNA in the assembled 50S subunit and ribosome. Functionally, the globular domain of the protein is located near the polypeptide exit tunnel on the outside of the subunit, while an extended beta-hairpin is found that lines the wall of the exit tunnel in the center of the 70S ribosome. This chain is Large ribosomal subunit protein uL22, found in Caldivirga maquilingensis (strain ATCC 700844 / DSM 13496 / JCM 10307 / IC-167).